Here is a 217-residue protein sequence, read N- to C-terminus: Probable transaldolase (217 aa).

The active-site Schiff-base intermediate with substrate is lysine 83.

Belongs to the transaldolase family. Type 3B subfamily.

It is found in the cytoplasm. It catalyses the reaction D-sedoheptulose 7-phosphate + D-glyceraldehyde 3-phosphate = D-erythrose 4-phosphate + beta-D-fructose 6-phosphate. It functions in the pathway carbohydrate degradation; pentose phosphate pathway; D-glyceraldehyde 3-phosphate and beta-D-fructose 6-phosphate from D-ribose 5-phosphate and D-xylulose 5-phosphate (non-oxidative stage): step 2/3. Transaldolase is important for the balance of metabolites in the pentose-phosphate pathway. The protein is Probable transaldolase of Pseudothermotoga lettingae (strain ATCC BAA-301 / DSM 14385 / NBRC 107922 / TMO) (Thermotoga lettingae).